The chain runs to 411 residues: Zinc finger protein draculin (411 aa).

The tract at residues 1–33 (MKNTTKPCRTEHHNAEGQRDRMEGNKKGETKAK) is disordered. The span at 8–32 (CRTEHHNAEGQRDRMEGNKKGETKA) shows a compositional bias: basic and acidic residues. 13 consecutive C2H2-type zinc fingers follow at residues 36-58 (VACSHCKKRFSHKAHLQIHMRVH), 64-86 (YRCDQCGKCFPYKQSLKLHLDIH), 92-114 (YTCDECGESFKTRLQLRSHMTLH), 120-142 (YKCDQCEKSYGREDHLQRHMKLH), 148-170 (HKCEHCGKSFPMRDLLRSHLMVH), 176-198 (YTCDQCGKGFTLKKSYNEHMNIH), 204-226 (YTCDQCGKGFPYEQSLNLHMRFH), 232-254 (FTCDQCGQSFSQKGAYNIHMKIH), 260-282 (YTCDQCGMSFRHGYSLKLHMTHH), 288-310 (FHCDQCDKCYSTALFLKNHIKTH), 316-338 (YSCLTCGKTFNQLRGLRLHEKRH), 344-366 (FMCFDCGKCYFTDTELKQHLPVH), and 372-394 (YMCSLCFKSFPRMGSLIVHEKTH).

In terms of tissue distribution, specifically expressed in the hematopoietic lineage during embryogenesis; first expressed at the late blastula stage around the blastoderm margin. During gastrulation, restricted to the ventral mesoderm, the presumptive prechordal plate and the dorso-marginal cells of the organizer. At the 3-somite stage, strongly expressed in a caudal domain (marking the erythroid lineage) and a cephalic domain of the lateral mesoderm. At the 8- to 10-somite stage, caudal expression is in two bands of lateral mesoderm which later converge at the midline. Anterior expression is also in two bands of lateral mesoderm which converge as two patches at the midline by the 15-somite stage, with increased scattering of single cells (macrophage precursors) away from the midline to the yolksac. Once at the yolksac, expression is lost. By 20-24 hours post-fertilization (hpf), expressed in proerythroblasts in the erythroid blood island centered above the uro-genital opening. Expression persists in circulating erythroblasts but is lost in mature erythrocytes.

This Danio rerio (Zebrafish) protein is Zinc finger protein draculin.